The primary structure comprises 1191 residues: Roquin-2 (1191 aa).

Cys-14, Cys-17, Cys-33, His-35, Cys-38, Cys-50, and Asp-53 together coordinate Zn(2+). The RING-type; degenerate zinc-finger motif lies at 14–54 (CPICYNEFDENVHKPISLGCSHTVCKTCLNKLHRKACPFDQ). The segment at 91 to 170 (ENKHYEVAKK…RTVTELILQH (80 aa)) is HEPN-N. The interval 171–325 (QNPQQLSANL…SIIDKLQSPE (155 aa)) is ROQ. Residues 326–396 (SFAKSVQELT…GLVDFIQNYS (71 aa)) are HEPN-C. The C3H1-type zinc-finger motif lies at 410–438 (KYKTSMCRDLRQQGGCPRGTNCTFAHSQE). Disordered stretches follow at residues 528-576 (GANG…NSVP) and 644-680 (ESSL…PQPY). The segment covering 530–546 (NGQNAAGPSADSVTENK) has biased composition (polar residues). Ser-549 bears the Phosphoserine mark. Positions 554–576 (PVSNVAATSAGPSNVGTELNSVP) are enriched in polar residues. Ser-808, Ser-983, and Ser-1119 each carry phosphoserine.

As to quaternary structure, interacts with EDC4. Interacts with CCR4-NOT deadenylase complex. Interacts with MAP3K5; the interaction is probably stimulus-dependent. Post-translationally, proteolytically cleaved after Arg-509 and Arg-585 by MALT1 in activated CD4(+) T cells; cleavage at Arg-509 and Arg-585 is critical for promoting RC3H1 degradation in response to T-cell receptor (TCR) stimulation, and hence is necessary for prolonging the stability of a set of mRNAs controlling Th17 cell differentiation. Expressed in spleen, testis, ovary and small intestine.

The protein localises to the cytoplasm. It localises to the P-body. It catalyses the reaction S-ubiquitinyl-[E2 ubiquitin-conjugating enzyme]-L-cysteine + [acceptor protein]-L-lysine = [E2 ubiquitin-conjugating enzyme]-L-cysteine + N(6)-ubiquitinyl-[acceptor protein]-L-lysine.. It participates in protein modification; protein ubiquitination. Binding to dsRNA, but not CDE RNA, crosstalks with the E3 ubiquitin ligase activity and may inhibit ubiquitination. Its function is as follows. Post-transcriptional repressor of mRNAs containing a conserved stem loop motif, called constitutive decay element (CDE), which is often located in the 3'-UTR, as in HMGXB3, ICOS, IER3, NFKBID, NFKBIZ, PPP1R10, TNF and in many more mRNAs. Binds to CDE and promotes mRNA deadenylation and degradation. This process does not involve miRNAs. In follicular helper T (Tfh) cells, represses of ICOS and TNFRSF4 expression, thus preventing spontaneous Tfh cell differentiation, germinal center B-cell differentiation in the absence of immunization and autoimmunity. In resting or LPS-stimulated macrophages, controls inflammation by suppressing TNF expression. Also recognizes CDE in its own mRNA and in that of paralogous RC3H1, possibly leading to feedback loop regulation. miRNA-binding protein that regulates microRNA homeostasis. Enhances DICER-mediated processing of pre-MIR146a but reduces mature MIR146a levels through an increase of 3' end uridylation. Both inhibits ICOS mRNA expression and they may act together to exert the suppression. Acts as a ubiquitin E3 ligase. Pairs with E2 enzymes UBE2B, UBE2D2, UBE2E2, UBE2E3, UBE2G2, UBE2K and UBE2Q2 and produces polyubiquitin chains. Shows the strongest activity when paired with UBE2N:UBE2V1 or UBE2N:UBE2V2 E2 complexes and generate both short and long polyubiquitin chains. Involved in the ubiquitination of MAP3K5. Able to interact with double-stranded RNA (dsRNA). In Homo sapiens (Human), this protein is Roquin-2 (RC3H2).